A 299-amino-acid polypeptide reads, in one-letter code: Putative arsenical pump-driving ATPase 2 (299 aa).

8–15 (GKGGVGKT) contacts ATP.

It belongs to the arsA ATPase family.

The enzyme catalyses arsenite(in) + ATP + H2O = arsenite(out) + ADP + phosphate + H(+). Functionally, anion-transporting ATPase. Catalyzes the extrusion of arsenite. The chain is Putative arsenical pump-driving ATPase 2 (arsA2) from Aquifex aeolicus (strain VF5).